A 269-amino-acid polypeptide reads, in one-letter code: Propanediol uptake facilitator PduF (269 aa).

Helical transmembrane passes span 10-30 (IAEF…LSAL) and 42-62 (ICII…GISG). Residues 66-68 (NPA) carry the NPA 1 motif. 3 helical membrane passes run 69 to 89 (ITIA…PYTV), 143 to 163 (VWQA…MIMA), and 179 to 199 (LLIG…TGFA). Residues 201-203 (NPA) carry the NPA 2 motif. Residues 228-248 (IPYFIVPIVAPIIGACAGAAI) form a helical membrane-spanning segment.

This sequence belongs to the MIP/aquaporin (TC 1.A.8) family.

The protein localises to the cell inner membrane. Its function is as follows. Probably facilitates diffusion of 1,2-propanediol (1,2-PD) into the cell. The protein is Propanediol uptake facilitator PduF of Citrobacter freundii.